The following is a 395-amino-acid chain: MTTENKKGYFGEFGGSYVPEVVQKALDKLEEAYNKYKDDEEFLKEYHHYLKNYSGRETPLYFAESLTNYLGGAKIYLKREDLNHLGAHKLNNVIGQILLAKRMGKKKVIAETGAGQHGVATAAAAAKFGMQCDIYMGALDVERQRLNVFRMEILGATVHAVEKGERTLKEAVDAAFKAWINNINDTFYVLGSAVGPHPYPSMVKDFQRVISQEARRQILEKENRLPDMIIACVGGGSNAIGAFAEFIPDKEVKLIGVEAAGKGLNTDRHAATLTLGTVDVLDGMKTYALFNEDGSVKPVYSISPGLDYPGIGPEHAFLRDSKRAEYVSATDDEAVNALLLLTKKEGIIPAIESSHALAEVIKRAPKLNKNKIIIVNISGRGDKDVAAIAEYLKNK.

At K89 the chain carries N6-(pyridoxal phosphate)lysine.

It belongs to the TrpB family. In terms of assembly, tetramer of two alpha and two beta chains. Requires pyridoxal 5'-phosphate as cofactor.

The enzyme catalyses (1S,2R)-1-C-(indol-3-yl)glycerol 3-phosphate + L-serine = D-glyceraldehyde 3-phosphate + L-tryptophan + H2O. The protein operates within amino-acid biosynthesis; L-tryptophan biosynthesis; L-tryptophan from chorismate: step 5/5. The beta subunit is responsible for the synthesis of L-tryptophan from indole and L-serine. In Fusobacterium nucleatum subsp. nucleatum (strain ATCC 25586 / DSM 15643 / BCRC 10681 / CIP 101130 / JCM 8532 / KCTC 2640 / LMG 13131 / VPI 4355), this protein is Tryptophan synthase beta chain.